A 369-amino-acid polypeptide reads, in one-letter code: Protein DUF642 L-GALACTONO-1,4-LACTONE-RESPONSIVE GENE 2 (369 aa).

Positions 1–19 (MEGVTVVSFFLLFIATAMA) are cleaved as a signal peptide. Asn125 carries N-linked (GlcNAc...) asparagine glycosylation.

In terms of tissue distribution, expressed in roots, seedlings and leaves.

Its subcellular location is the secreted. It localises to the cell wall. In terms of biological role, involved in the regulation of testa rupture during seed germination. Required during roots and rosettes development. This chain is Protein DUF642 L-GALACTONO-1,4-LACTONE-RESPONSIVE GENE 2, found in Arabidopsis thaliana (Mouse-ear cress).